The primary structure comprises 159 residues: Ribosomal RNA large subunit methyltransferase H (159 aa).

S-adenosyl-L-methionine is bound by residues L76, G108, and 127-132 (FSKMTF).

It belongs to the RNA methyltransferase RlmH family. Homodimer.

The protein localises to the cytoplasm. The enzyme catalyses pseudouridine(1915) in 23S rRNA + S-adenosyl-L-methionine = N(3)-methylpseudouridine(1915) in 23S rRNA + S-adenosyl-L-homocysteine + H(+). In terms of biological role, specifically methylates the pseudouridine at position 1915 (m3Psi1915) in 23S rRNA. This is Ribosomal RNA large subunit methyltransferase H from Geobacillus thermodenitrificans (strain NG80-2).